The primary structure comprises 116 residues: UPF0134 protein MPN_038 (116 aa).

The protein belongs to the UPF0134 family.

The chain is UPF0134 protein MPN_038 from Mycoplasma pneumoniae (strain ATCC 29342 / M129 / Subtype 1) (Mycoplasmoides pneumoniae).